We begin with the raw amino-acid sequence, 494 residues long: MGRKKIQITRIMDERNRQVTFTKRKFGLMKKAYELSVLCDCEIALIIFNSSNKLFQYASTDMDKVLLKYTEYNEPHESRTNSDIVETLRKKGLNGCESPDADDYFEHSPLSEDRFSKLNEDSDFIFKRGPPGLPPQNFSMSVTVPVTSPNALSYTNPGSSLVSPSLAASSTLTDSSMLSPPQTTLHRNVSPGAPQRPPSTGNAGGMLSTTDLIVPNGAGSSPVGNGFVNSRASPNLIGATGANSLGKVMPTKSPPPPGGGNLGMNSRKPDLRVVIPPSSKGMMPPLNTQRISSSQATQPLATPVVSVTTPSLPPQGLVYSAMPTAYNTDYSLTSADLSALQGFNSPGMLSLGQVSAWQQHHLGQAALSSLVAGGQLSQGSNLSINTNQNINIKSEPISPPRDRMTPSGFQQQQQQQQQPPPPPPQPQPPQPQPRQEMGRSPVDSLSSSSSSYDGSDREDPRGDFHSPIVLGRPPNTEDRESPSVKRMRMDAWVT.

The MADS-box domain maps to 3–57; it reads RKKIQITRIMDERNRQVTFTKRKFGLMKKAYELSVLCDCEIALIIFNSSNKLFQY. Residues 58–86 constitute a DNA-binding region (mef2-type); sequence ASTDMDKVLLKYTEYNEPHESRTNSDIVE. A Phosphoserine; by CK2 modification is found at S59. S98 and S108 each carry phosphoserine. Residues 171 to 181 are compositionally biased toward low complexity; that stretch reads TLTDSSMLSPP. The interval 171-218 is disordered; the sequence is TLTDSSMLSPPQTTLHRNVSPGAPQRPPSTGNAGGMLSTTDLIVPNGA. A Phosphoserine modification is found at S233. The segment at 238-268 is disordered; it reads GATGANSLGKVMPTKSPPPPGGGNLGMNSRK. K247 bears the N6-acetyllysine mark. S253 is subject to Phosphoserine. Positions 264 to 281 are required for interaction with MAPKs; that stretch reads MNSRKPDLRVVIPPSSKG. Residues T302 and T309 each carry the phosphothreonine; by MAPK7 and MAPK14 modification. Phosphoserine; by MAPK7 is present on S345. Polar residues predominate over residues 380-392; the sequence is SNLSINTNQNINI. The disordered stretch occupies residues 380–494; sequence SNLSINTNQN…KRMRMDAWVT (115 aa). Position 393 is an N6-acetyllysine; alternate (K393). K393 participates in a covalent cross-link: Glycyl lysine isopeptide (Lys-Gly) (interchain with G-Cter in SUMO); alternate. S398 is modified (phosphoserine; by CDK5). Residue T405 is modified to Phosphothreonine. Pro residues predominate over residues 418-432; the sequence is QPPPPPPQPQPPQPQ. A Phosphoserine modification is found at S440. The span at 440–453 shows a compositional bias: low complexity; sequence SPVDSLSSSSSSYD. 2 stretches are compositionally biased toward basic and acidic residues: residues 454 to 464 and 475 to 494; these read GSDREDPRGDF and NTEDRESPSVKRMRMDAWVT.

Binds DNA as a homo- or heterodimer. Dimerizes with MEF2D. Interacts with HDAC7. Interacts with PIAS1; the interaction enhances sumoylation. Interacts with HDAC4, HDAC9 and SLC2A4RG. Interacts (via the N-terminal) with MAPK7; the interaction results in the phosphorylation and transcriptional activity of MEF2A. Post-translationally, constitutive phosphorylation on Ser-398 promotes Lys-393 sumoylation thus preventing acetylation at this site. Dephosphorylation on Ser-398 by PPP3CA upon neuron depolarization promotes a switch from sumoylation to acetylation on residue Lys-393 leading to inhibition of dendrite claw differentiation. Phosphorylation on Thr-302 and Thr-309 are the main sites involved in p38 MAPK signaling and activate transcription. Phosphorylated on these sites by MAPK14/p38alpha and MAPK11/p38beta, but not by MAPK13/p38delta nor by MAPK12/p38gamma. Phosphorylation on Ser-398 by CDK5 induced by neurotoxicity inhibits MEF2A transcriptional activation leading to apoptosis of cortical neurons. Phosphorylation on Thr-302, Thr-309 and Ser-345 can be induced by EGF. Sumoylation on Lys-393 is enhanced by PIAS1 and represses transcriptional activity. Phosphorylation on Ser-398 is required for sumoylation. Has no effect on nuclear location nor on DNA binding. Sumoylated with SUMO1 and, to a lesser extent with SUMO2 and SUMO3. PIASx facilitates sumoylation in postsynaptic dendrites in the cerebellar cortex and promotes their morphogenesis. In terms of processing, acetylation on Lys-393 activates transcriptional activity. Acetylated by p300 on several sites in diffentiating myocytes. Acetylation on Lys-4 increases DNA binding and transactivation. Hyperacetylation by p300 leads to enhanced cardiac myocyte growth and heart failure. Post-translationally, proteolytically cleaved in cerebellar granule neurons on several sites by caspase 3 and caspase 7 following neurotoxicity. Preferentially cleaves the CDK5-mediated hyperphosphorylated form which leads to neuron apoptosis and transcriptional inactivation.

The protein localises to the nucleus. Its function is as follows. Transcriptional activator which binds specifically to the MEF2 element, 5'-YTA[AT](4)TAR-3', found in numerous muscle-specific genes. Also involved in the activation of numerous growth factor- and stress-induced genes. Mediates cellular functions not only in skeletal and cardiac muscle development, but also in neuronal differentiation and survival. Plays diverse roles in the control of cell growth, survival and apoptosis via p38 MAPK signaling in muscle-specific and/or growth factor-related transcription. In cerebellar granule neurons, phosphorylated and sumoylated MEF2A represses transcription of NUR77 promoting synaptic differentiation. Associates with chromatin to the ZNF16 promoter. The protein is Myocyte-specific enhancer factor 2A (MEF2A) of Pongo abelii (Sumatran orangutan).